The following is an 88-amino-acid chain: Toxin ICK-12 (88 aa).

A signal peptide spans 1-19; it reads MKSIVYMLLFCTFTVVILG. Cystine bridges form between C41–C55, C41–C78, C54–C67, and C81–C88.

It belongs to the neurotoxin 27 (Jztx-72) family. ICK-41 subfamily. In terms of tissue distribution, expressed by the venom gland.

Its subcellular location is the secreted. Functionally, probable neurotoxin with ion channel impairing activity. The protein is Toxin ICK-12 of Trittame loki (Brush-footed trapdoor spider).